Consider the following 307-residue polypeptide: UDP-N-acetylenolpyruvoylglucosamine reductase (307 aa).

An FAD-binding PCMH-type domain is found at 33-198 (KVGGPADIFV…LNATFALQKG (166 aa)). Arg177 is a catalytic residue. Ser227 serves as the catalytic Proton donor. Glu297 is an active-site residue.

Belongs to the MurB family. FAD serves as cofactor.

Its subcellular location is the cytoplasm. It carries out the reaction UDP-N-acetyl-alpha-D-muramate + NADP(+) = UDP-N-acetyl-3-O-(1-carboxyvinyl)-alpha-D-glucosamine + NADPH + H(+). It participates in cell wall biogenesis; peptidoglycan biosynthesis. In terms of biological role, cell wall formation. This chain is UDP-N-acetylenolpyruvoylglucosamine reductase, found in Clostridium novyi (strain NT).